The chain runs to 333 residues: Aspartate carbamoyltransferase catalytic subunit (333 aa).

2 residues coordinate carbamoyl phosphate: Arg61 and Thr62. Residue Lys89 participates in L-aspartate binding. Carbamoyl phosphate contacts are provided by Arg111, His144, and Gln147. Residues Arg184 and Arg248 each coordinate L-aspartate. Positions 289 and 290 each coordinate carbamoyl phosphate.

This sequence belongs to the aspartate/ornithine carbamoyltransferase superfamily. ATCase family. In terms of assembly, heterododecamer (2C3:3R2) of six catalytic PyrB chains organized as two trimers (C3), and six regulatory PyrI chains organized as three dimers (R2).

The enzyme catalyses carbamoyl phosphate + L-aspartate = N-carbamoyl-L-aspartate + phosphate + H(+). The protein operates within pyrimidine metabolism; UMP biosynthesis via de novo pathway; (S)-dihydroorotate from bicarbonate: step 2/3. In terms of biological role, catalyzes the condensation of carbamoyl phosphate and aspartate to form carbamoyl aspartate and inorganic phosphate, the committed step in the de novo pyrimidine nucleotide biosynthesis pathway. This chain is Aspartate carbamoyltransferase catalytic subunit, found in Trichormus variabilis (strain ATCC 29413 / PCC 7937) (Anabaena variabilis).